The primary structure comprises 325 residues: Cytochrome c1, heme protein, mitochondrial (325 aa).

The transit peptide at 1–84 directs the protein to the mitochondrion; it reads MAAAAATLRG…AVALHSAVSA (84 aa). Residues 85–281 are Mitochondrial intermembrane-facing; that stretch reads SDLELHPPSY…TFLRWAAEPE (197 aa). The region spanning 108–209 is the Cytochrome c domain; sequence TSIRRGFQVY…IVRARHGGED (102 aa). The heme c site is built by Cys-121, Cys-124, His-125, and Met-244. A helical transmembrane segment spans residues 282 to 315; sequence HDHRKRMGLKMLLMMGLLLPLVYAMKRHKWSVLK. Residues 316–325 are Mitochondrial matrix-facing; that stretch reads SRKLAYRPPK.

The protein belongs to the cytochrome c family. In terms of assembly, component of the ubiquinol-cytochrome c oxidoreductase (cytochrome b-c1 complex, complex III, CIII), a multisubunit enzyme composed of 11 subunits. The complex is composed of 3 respiratory subunits cytochrome b, cytochrome c1 and Rieske protein UQCRFS1, 2 core protein subunits UQCRC1/QCR1 and UQCRC2/QCR2, and 6 low-molecular weight protein subunits UQCRH/QCR6, UQCRB/QCR7, UQCRQ/QCR8, UQCR10/QCR9, UQCR11/QCR10 and subunit 9, the cleavage product of Rieske protein UQCRFS1. The complex exists as an obligatory dimer and forms supercomplexes (SCs) in the inner mitochondrial membrane with NADH-ubiquinone oxidoreductase (complex I, CI) and cytochrome c oxidase (complex IV, CIV), resulting in different assemblies (supercomplex SCI(1)III(2)IV(1) and megacomplex MCI(2)III(2)IV(2)). Interacts with FLVCR2; this interaction occurs in the absence of heme and is disrupted upon heme binding. Heme c is required as a cofactor.

The protein resides in the mitochondrion inner membrane. It catalyses the reaction a quinol + 2 Fe(III)-[cytochrome c](out) = a quinone + 2 Fe(II)-[cytochrome c](out) + 2 H(+)(out). Its function is as follows. Component of the ubiquinol-cytochrome c oxidoreductase, a multisubunit transmembrane complex that is part of the mitochondrial electron transport chain which drives oxidative phosphorylation. The respiratory chain contains 3 multisubunit complexes succinate dehydrogenase (complex II, CII), ubiquinol-cytochrome c oxidoreductase (cytochrome b-c1 complex, complex III, CIII) and cytochrome c oxidase (complex IV, CIV), that cooperate to transfer electrons derived from NADH and succinate to molecular oxygen, creating an electrochemical gradient over the inner membrane that drives transmembrane transport and the ATP synthase. The cytochrome b-c1 complex catalyzes electron transfer from ubiquinol to cytochrome c, linking this redox reaction to translocation of protons across the mitochondrial inner membrane, with protons being carried across the membrane as hydrogens on the quinol. In the process called Q cycle, 2 protons are consumed from the matrix, 4 protons are released into the intermembrane space and 2 electrons are passed to cytochrome c. Cytochrome c1 is a catalytic core subunit containing a c-type heme. It transfers electrons from the [2Fe-2S] iron-sulfur cluster of the Rieske protein to cytochrome c. This chain is Cytochrome c1, heme protein, mitochondrial (CYC1), found in Bos taurus (Bovine).